Consider the following 122-residue polypeptide: Large ribosomal subunit protein uL14 (122 aa).

The protein belongs to the universal ribosomal protein uL14 family. As to quaternary structure, part of the 50S ribosomal subunit. Forms a cluster with proteins L3 and L19. In the 70S ribosome, L14 and L19 interact and together make contacts with the 16S rRNA in bridges B5 and B8.

Functionally, binds to 23S rRNA. Forms part of two intersubunit bridges in the 70S ribosome. The protein is Large ribosomal subunit protein uL14 of Chlorobium phaeovibrioides (strain DSM 265 / 1930) (Prosthecochloris vibrioformis (strain DSM 265)).